The chain runs to 374 residues: Pectinesterase (374 aa).

A signal peptide spans 1 to 31 (MVKLLNSTRELSINALSMLNSFGDMVAQATG). Residues N58 and N124 are each glycosylated (N-linked (GlcNAc...) asparagine). Residues T133 and Q163 each contribute to the substrate site. Catalysis depends on D186, which acts as the Proton donor. Residues C200 and C220 are joined by a disulfide bond. D207 acts as the Nucleophile in catalysis. An N-linked (GlcNAc...) asparagine glycan is attached at N230. Residues R275 and W277 each coordinate substrate. N303 is a glycosylation site (N-linked (GlcNAc...) asparagine).

It belongs to the pectinesterase family. In terms of tissue distribution, pollen, and at much lower levels in pistils and petals.

The protein localises to the secreted. It is found in the cell wall. The catalysed reaction is [(1-&gt;4)-alpha-D-galacturonosyl methyl ester](n) + n H2O = [(1-&gt;4)-alpha-D-galacturonosyl](n) + n methanol + n H(+). The protein operates within glycan metabolism; pectin degradation; 2-dehydro-3-deoxy-D-gluconate from pectin: step 1/5. Functionally, may play a role in pollen germination and/or tube growth. The chain is Pectinesterase (PPE1) from Petunia integrifolia (Violet-flowered petunia).